A 138-amino-acid polypeptide reads, in one-letter code: Phospholipase A2 EC3 (138 aa).

The N-terminal stretch at 1 to 16 is a signal peptide; the sequence is MRTLWIVAVWLMGVEG. 7 disulfides stabilise this stretch: C42-C131, C44-C60, C59-C111, C65-C138, C66-C104, C73-C97, and C91-C102. Ca(2+) is bound by residues Y43, G45, and G47. H63 is an active-site residue. D64 is a binding site for Ca(2+). D105 is an active-site residue.

Belongs to the phospholipase A2 family. Group II subfamily. Ca(2+) is required as a cofactor.

The protein resides in the secreted. The catalysed reaction is a 1,2-diacyl-sn-glycero-3-phosphocholine + H2O = a 1-acyl-sn-glycero-3-phosphocholine + a fatty acid + H(+). In terms of biological role, PA2 catalyzes the calcium-dependent hydrolysis of the 2-acyl groups in 3-sn-phosphoglycerides. In Echis coloratus (Carpet viper), this protein is Phospholipase A2 EC3.